Here is a 119-residue protein sequence, read N- to C-terminus: Ig heavy chain V region X44 (119 aa).

In terms of domain architecture, Ig-like spans 1-117 (EVKLLESGGG…WGQGTLVTVS (117 aa)).

The polypeptide is Ig heavy chain V region X44 (Mus musculus (Mouse)).